The following is a 366-amino-acid chain: Leucine dehydrogenase (366 aa).

Residue lysine 80 is part of the active site. Residue 180-186 (GVGHVAY) coordinates NAD(+).

This sequence belongs to the Glu/Leu/Phe/Val dehydrogenases family. As to quaternary structure, homooctamer.

It catalyses the reaction L-leucine + NAD(+) + H2O = 4-methyl-2-oxopentanoate + NH4(+) + NADH + H(+). Its pathway is amino-acid degradation; L-leucine degradation; 4-methyl-2-oxopentanoate from L-leucine (dehydrogenase route): step 1/1. Inhibited by pyridoxal phosphate. Functionally, catalyzes the reversible deamination of L-leucine to 4-methyl-2-oxopentanoate. Exhibits the highest activity with L-leucine as substrate, but can also use other L-amino acids such as L-isoleucine, L-valine and L-2-aminovaleric acid. All of the oxo analogs of the amino acid substrates serve as good substrates for the reverse reaction. The protein is Leucine dehydrogenase (ldh) of Thermoactinomyces intermedius.